Here is a 473-residue protein sequence, read N- to C-terminus: MVKDFSFFIYDYESFGVNPATDRPAQFAGIRTDADFNIIGEPIMFYCKQTNDYLPAPEAVMVTGITPQECNEKGLSEPEFAANILAEFSQPNTCVMGYNNIRYDDEMTRYTFYRNFIEPYEYSWKNGNSRWDLLDLVRACYALRPEGINWAYDDDGMPSFRLEKLTKANSIEHENAHDAMADVYATIAMAKLIKEKQPKLFQYFFENRGKKEIEKLVDTGAMTPLVHVSGMLGNYRGNCTWVAPLAWHPTNQNALIVCDLTGDIDNLLAKSADELRADLYTKKLELEERGVSSVPLKLVHINKCPILAPAKTLLPETANRLGIDRQLCLDNLAKLRASFDIREKVADIFNEERQFASNDNVETELYNGFFSNADKNNMAILRSLPAEKLSEHGLAFEDKRILELLFHYRARHFYKTLTRAEQIKWKKYRQNKLEKSAVEFEASLQRLVEXHSDNSEKLSLLQQVYEYGIKLLG.

The region spanning 9-188 (IYDYESFGVN…AMADVYATIA (180 aa)) is the Exonuclease domain. Mg(2+)-binding residues include aspartate 11, glutamate 13, and aspartate 182. Glutamate 13 is a binding site for substrate. In terms of domain architecture, ExoI SH3-like spans 198 to 353 (PKLFQYFFEN…KVADIFNEER (156 aa)). The ExoI C-terminal domain maps to 356 to 472 (ASNDNVETEL…QVYEYGIKLL (117 aa)).

In terms of assembly, monomer. Interacts with ssb (via C-terminus); this interaction stimulates the exonuclease activity by recruiting the enzyme to its substrate. Mg(2+) serves as cofactor.

It catalyses the reaction Exonucleolytic cleavage in the 3'- to 5'-direction to yield nucleoside 5'-phosphates.. Functionally, degrades single-stranded DNA (ssDNA) in a highly processive manner. Also functions as a DNA deoxyribophosphodiesterase that releases deoxyribose-phosphate moieties following the cleavage of DNA at an apurinic/apyrimidinic (AP) site by either an AP endonuclease or AP lyase. Involved in genome maintenance but probably not in phase variation, which contributes to the virulence and disease. This Haemophilus influenzae (strain ATCC 51907 / DSM 11121 / KW20 / Rd) protein is Exodeoxyribonuclease I (sbcB).